Here is an 85-residue protein sequence, read N- to C-terminus: Small ribosomal subunit protein uS17 (85 aa).

Belongs to the universal ribosomal protein uS17 family. In terms of assembly, part of the 30S ribosomal subunit.

Functionally, one of the primary rRNA binding proteins, it binds specifically to the 5'-end of 16S ribosomal RNA. This Anaeromyxobacter dehalogenans (strain 2CP-1 / ATCC BAA-258) protein is Small ribosomal subunit protein uS17.